The following is a 435-amino-acid chain: MSKFIINPSNSMYGNLKIPGDKSISHRSIMLGSLANGVTKISGFLEGKDVLSTLKGFQNMGVKIERNSDNVIIYGVGLNGLKKSLVPLNFGNSGTSIRLISGILAAQTFDSELYGDESLSKRPMGRVINPLVQMGALIESNDGKLPIKIKGGQTLKGINYDLPVASAQVKSCILLAGLYAQGETCIKESILTRDHTERMLKGLGYRLDTNKNKICLTGGAQLNAANIQVPSDISSAAFFIVAASIAPQADITLIGVNVNPTRTGIIDILKLMGANLSLSNECVIGGELLANIRIQSAQLKGIRIPKDLVPLAIDEFPAIFIAASCAKGETILTNAKELRVKESDRIQVMADGLSILGIENEVFEDGIKIKGGVFSKPSSTIKSHHDHRISMSFAIASLRCHYAIEIEDVDNVQTSFPNFVELANQIGMNISLVSA.

Positions 22, 23, and 27 each coordinate 3-phosphoshikimate. A phosphoenolpyruvate-binding site is contributed by Lys22. Phosphoenolpyruvate-binding residues include Gly94 and Arg122. 4 residues coordinate 3-phosphoshikimate: Ser166, Gln168, Asp314, and Lys341. Gln168 is a binding site for phosphoenolpyruvate. Catalysis depends on Asp314, which acts as the Proton acceptor. Positions 345 and 388 each coordinate phosphoenolpyruvate.

This sequence belongs to the EPSP synthase family. As to quaternary structure, monomer.

It localises to the cytoplasm. The catalysed reaction is 3-phosphoshikimate + phosphoenolpyruvate = 5-O-(1-carboxyvinyl)-3-phosphoshikimate + phosphate. It participates in metabolic intermediate biosynthesis; chorismate biosynthesis; chorismate from D-erythrose 4-phosphate and phosphoenolpyruvate: step 6/7. In terms of biological role, catalyzes the transfer of the enolpyruvyl moiety of phosphoenolpyruvate (PEP) to the 5-hydroxyl of shikimate-3-phosphate (S3P) to produce enolpyruvyl shikimate-3-phosphate and inorganic phosphate. This is 3-phosphoshikimate 1-carboxyvinyltransferase from Vesicomyosocius okutanii subsp. Calyptogena okutanii (strain HA).